Consider the following 1383-residue polypeptide: WD repeat-containing protein dyf-2 (1383 aa).

WD repeat units follow at residues 32–71 (EHGSGPIIHRWRPNGHTVAVACANNTVIYYDKKGNVIDAL), 72–112 (NPTG…TDTV), 118–157 (SSKELPTCLAWSPSTPTLVIGNNAGNIVVYNHRTSRRIAV), 160–198 (KHQRSVTQITVTPEDYVISCSDDNTLSVTTLEGTTVSTT), and 337–376 (ETEKNLSEIEVTEDGQLVAVSSQSGVLSIFVTKMPTLAAS). TPR repeat units lie at residues 756–789 (EEKNLLHAQIYTILSRYDDAEQLYLESSRPMEAL), 810–847 (PKEIPYLSKEYAQELELTGDHANSLANYEKGVMENPQN), 885–918 (RVVKRDCAIILEQMKQYTEAAQLYEVGLFYDRAA), 940–973 (PKIHIQYGKIMEKEKKYKVAVKCYETGRDYDNQV), 996–1029 (IEGAKLVAKFFVKLGDYNSAIQFLVMSQCVQEAF), 1031–1053 (LAEKNNAVREYAKAIEQHGNISQ), and 1064–1097 (VNDMFMAAKFYTQAGQYNNAINLLFKNGDDENCV).

In terms of assembly, component of the IFT complex A (IFT-A) composed of at least che-11, daf-10, dyf-2, ift-139, ift-43 and ifta-1. Expressed in ciliated sensory neurons.

The protein localises to the cell projection. It is found in the cilium. In terms of biological role, component of the IFT complex A (IFT-A), a complex required for retrograde ciliary transport. Moves along the ciliary axoneme and is involved in the assembly, localization and the movement of other intraflagellar transport (IFT) proteins along the cilia axoneme. May also associate with the BBSome complex in order to mediate ciliary transport. Regulates cilia biogenesis, morphology and sensitivity to environmental cues. This Caenorhabditis elegans protein is WD repeat-containing protein dyf-2.